Reading from the N-terminus, the 83-residue chain is uncharacterized protein (83 aa).

The protein belongs to the chlamydial CPn_0711/CT_665/TC_0036 family.

This is an uncharacterized protein from Chlamydia trachomatis serovar D (strain ATCC VR-885 / DSM 19411 / UW-3/Cx).